The following is a 992-amino-acid chain: MNNSVYGVAFRSLSTGDEKLYKEATRFYHSLGFQTVKLYDNFKNHDDSNLIVGTSKNSVKECWLESFKLSELDSQGFRVPQQEASNQLQTDGVMIKLRLVDTEPLNQTADTVVYYTVSLDEVSKIGERVDDHNVKLVDPLGNVVLVTDSHDGKELNASEFIAPKDSSVEQKITVELVDKDSKKKKIAVMTSGGDSQGMNAAVRAVVRSSIYYGCDVYAVYEGYEGLVKGGDYLRKMEWKDVRGWLSEGGTLIGTARSKEFRERWGRKQACSNLIDQGIDALVVIGGDGSLTGADLFRSEWPSLVEELVKDGKFTEDEVALYQNLTIVGMVGSIDNDMSGTDSTIGAYSALERICEMVDYIDATAKSHSRAFVVEVMGRHCGWLGLMSGIATAADYIFIPERAAPHGKWQDELKRVCQRHREKGRRNNTVIVAEGALDDQLNPITAEQVKDVLVELGLDTKITTLGHVQRGGTAVAHDRWLATLQGVDAVKAILNMTPETPSPLIGILENKVIRMPLVESVKLTKQVAAAIEAKDFDKAISLRDTEFIELYSNFMSTTVNDDGSQLLPEADRLNIAIVHVGAPSAALNAATRAATLYCLAHGHRPYAITNGFSGLIQTGQVKELSWIDVEDWHNLGGSEIGTNRSVAAEDMGTIAYHFQKNKFDGVIILGGFEGFKSLKQLRDGRDQYPIFNIPMCLIPATVSNNVPGTEYSLGSDTCLNALVKYTDAIKQSASSTRRRVFVVEVQGGHSGYVASFTGLVTGAVSVYTPENAINLKTIQEDLALLKESFKHEQGETRNGKLVIRNEMASDVYTTELLADIITEQSNDRFGVRTAIPGHVQQGGVPSSKDRVIASRFAVKCVKFIEQWNKKNTAADNEDFKILRFNYVNGVKQYTVLDEDLSAAVICVNGSKISFKPIAHIWENETNIELRKGQEIHWEEYNEIGDILSGRSMLRRKIQKEQQEESSLPSVADTPLSSVTVSTSAAKEDSALYV.

The N-terminal catalytic PFK domain 1 stretch occupies residues 1–558 (MNNSVYGVAF…LYSNFMSTTV (558 aa)). ATP-binding positions include glycine 193, 256–257 (RS), and 286–289 (GDGS). Aspartate 287 is a binding site for Mg(2+). Residues 332–334 (SID), arginine 369, 376–378 (MGR), glutamate 433, lysine 460, and 466–469 (HVQR) contribute to the beta-D-fructose 6-phosphate site. Residue aspartate 334 is the Proton acceptor of the active site. The interdomain linker stretch occupies residues 559-572 (NDDGSQLLPEADRL). Residues 573–992 (NIAIVHVGAP…AAKEDSALYV (420 aa)) form a C-terminal regulatory PFK domain 2 region. Beta-D-fructose 2,6-bisphosphate is bound by residues arginine 643, 700-704 (TVSNN), arginine 738, 745-747 (QGG), glutamate 805, arginine 831, 837-840 (HVQQ), and arginine 929.

Belongs to the phosphofructokinase type A (PFKA) family. ATP-dependent PFK group I subfamily. Eukaryotic two domain clade 'E' sub-subfamily. As to quaternary structure, heterooctamer of 4 alpha and 4 beta chains. Mg(2+) is required as a cofactor.

The protein localises to the cytoplasm. The enzyme catalyses beta-D-fructose 6-phosphate + ATP = beta-D-fructose 1,6-bisphosphate + ADP + H(+). The protein operates within carbohydrate degradation; glycolysis; D-glyceraldehyde 3-phosphate and glycerone phosphate from D-glucose: step 3/4. With respect to regulation, allosterically activated by ADP, AMP, or fructose 2,6-bisphosphate, and allosterically inhibited by ATP or citrate. Functionally, catalyzes the phosphorylation of D-fructose 6-phosphate to fructose 1,6-bisphosphate by ATP, the first committing step of glycolysis. The chain is ATP-dependent 6-phosphofructokinase subunit alpha (PFK1) from Kluyveromyces lactis (strain ATCC 8585 / CBS 2359 / DSM 70799 / NBRC 1267 / NRRL Y-1140 / WM37) (Yeast).